The chain runs to 157 residues: Probable succinate transporter subunit YjjB (157 aa).

Helical transmembrane passes span 8-28 (LALA…AMVF), 50-70 (MILM…SMLV), 87-107 (VFTV…TAMI), and 129-149 (FLTA…PGLW).

It belongs to the ThrE exporter (TC 2.A.79) family. As to quaternary structure, the transporter is composed of YjjB and YjjP.

It is found in the cell inner membrane. In terms of biological role, involved in succinate export with YjjP. Both proteins are required for export. In Escherichia coli O1:K1 / APEC, this protein is Probable succinate transporter subunit YjjB.